The sequence spans 295 residues: uncharacterized protein (295 aa).

This is an uncharacterized protein from Rickettsia prowazekii (strain Madrid E).